Here is a 622-residue protein sequence, read N- to C-terminus: Leucine-rich repeat-containing protein 70 (622 aa).

Positions 1-31 (MCGLQFSLPCLRLFLVVTCYLLLLLHKEILG) are cleaved as a signal peptide. Residues 32 to 60 (CSSVCQLCTGRQINCRNLGLSSIPKNFPE) form the LRRNT domain. 12 LRR repeats span residues 61–82 (STVF…ELTG), 85–106 (SLVA…AFVQ), 109–130 (HLYF…IFKG), 133–154 (NLRN…VFND), 157–178 (SVQY…TFVG), 181–202 (ALRI…GFQH), 205–226 (NLAC…AFEV), 229–250 (SLRR…AFKG), 253–274 (NLEY…GFSG), 277–298 (NLKH…TFSL), 301–322 (NLIY…TFEN), and 326–347 (SLKI…VLKP). Residue Asn-215 is glycosylated (N-linked (GlcNAc...) asparagine). Asn-266 is a glycosylation site (N-linked (GlcNAc...) asparagine). N-linked (GlcNAc...) asparagine glycosylation is found at Asn-331 and Asn-400. One can recognise an LRRCT domain in the interval 359 to 406 (NPWECNCKLLGLRDWLASSAITLNIYCQNPPSMRGRALRYINITNCVT). The helical transmembrane segment at 527–547 (AFDILLAFFILACVLIIFLIY) threads the bilayer.

In terms of tissue distribution, expressed at low levels in many tissues, including smooth muscle, brain, uterus, pancreas, cartilage, adipose, spleen and testis.

It is found in the membrane. In terms of biological role, renders cells highly sensitive to the activation by cytokines and lipopolysaccharide (LPS). The polypeptide is Leucine-rich repeat-containing protein 70 (LRRC70) (Homo sapiens (Human)).